The following is a 250-amino-acid chain: Low affinity immunoglobulin gamma Fc region receptor III-A (250 aa).

The first 20 residues, 1–20 (MWRLLSPTALLLLVSAGTRA), serve as a signal peptide directing secretion. Topologically, residues 21–207 (ADLSKAMVVL…TSTFLPHWYQ (187 aa)) are extracellular. Ig-like C2-type domains lie at 32–105 (PEWN…LEVH) and 120–189 (EGDT…VNIT). 2 disulfides stabilise this stretch: C47-C89 and C128-C172. N63, N133, N180, and N187 each carry an N-linked (GlcNAc...) asparagine glycan. A helical membrane pass occupies residues 208 to 228 (IAFFLVTALLFVVDTGLHVAV). The Cytoplasmic portion of the chain corresponds to 229-250 (QRDLQSSVKEWKDGKVTWSHGP).

Forms a heterooligomeric complex with ITAM-containing signaling subunits FCER1G. Interacts (via transmembrane domain) with signaling subunits; this interaction is a prerequisite for receptor complex expression on the cell surface and intracellular signal transduction. Binds the Fc region of antigen-complexed IgG.

The protein resides in the cell membrane. In terms of biological role, receptor for the invariable Fc fragment of immunoglobulin gamma (IgG). Optimally activated upon binding of clustered antigen-IgG complexes displayed on cell surfaces, triggers lysis of antibody-coated cells, a process known as antibody-dependent cellular cytotoxicity (ADCC). Does not bind free monomeric IgG, thus avoiding inappropriate effector cell activation in the absence of antigenic trigger. Mediates IgG effector functions on natural killer (NK) cells. Binds antigen-IgG complexes generated upon infection and triggers NK cell-dependent cytokine production and degranulation to limit viral load and propagation. Fc-binding subunit that associates with FCER1G adapter to form functional signaling complexes. Following the engagement of antigen-IgG complexes, triggers phosphorylation of immunoreceptor tyrosine-based activation motif (ITAM)-containing adapter with subsequent activation of phosphatidylinositol 3-kinase signaling and sustained elevation of intracellular calcium that ultimately drive NK cell activation. Mediates enhanced ADCC in response to afucosylated IgGs. This Felis catus (Cat) protein is Low affinity immunoglobulin gamma Fc region receptor III-A.